Consider the following 253-residue polypeptide: Short chain dehydrogenase ple7 (253 aa).

The helical transmembrane segment at 5-25 (IVIVTGASHGIGLATVNLLLA) threads the bilayer. NADP(+) is bound by residues Val8, Arg116, Tyr148, Lys152, and Asn184. The active-site Proton acceptor is the Tyr148. Lys152 (lowers pKa of active site Tyr) is an active-site residue. An N-linked (GlcNAc...) asparagine glycan is attached at Asn187.

Belongs to the short-chain dehydrogenases/reductases (SDR) family.

The protein localises to the membrane. Its pathway is secondary metabolite biosynthesis; terpenoid biosynthesis. Functionally, short chain dehydrogenase; part of the gene cluster that mediates the biosynthesis of pleuromutilin, a tricyclic diterpene showing antibacterial properties. The geranylgeranyl diphosphate (GGPP) synthase ple4 catalyzes the first step in pleuromutilin biosynthesis. GGPP is then substrate of the premutilin synthase (PS) ple3 to yield premutilin. Premutilin synthase is a bifunctional enzyme composed of the fusion of a class II diterpene cyclase (DTC) and a class I diterpene synthase (DTS), with the corresponding domains and active sites containing characteristic aspartate-rich motifs. GGPP is first converted to mutildienyl-diphosphate (MPP) at the class II DTC site. MPP is subsequently further cyclized at the class I DTS site, followed by a 1,5-hydride shift and addition of water prior to terminating deprotonation, to yield premutilin. The cytochrome P450 monooxygenases ple5 and ple6 hydroxylate premutilin at C-11 and C-3, respectively, producing 11-hydroxypremutilin and 3-hydroxypremutilin. The combination of the actions of both ple5 and ple6 leads to the production of 3,11-dihydroxypremutilin. The short chain dehydrogenase ple7 further converts 3,11-dihydroxypremutilin into mutilin. The acetyltransferase ple2 then acetylates mutilin to produce 14-O-acetylmutilin. Finally, the cytochrome P450 monooxygenase ple1 catalyzes hydroxylation on the alpha position of the acetyl side chain of 14-O-acetylmutilin to yield pleuromutilin. The polypeptide is Short chain dehydrogenase ple7 (Rhodocybe pseudopiperita (Clitopilus pseudopiperitus)).